A 159-amino-acid polypeptide reads, in one-letter code: Ribosomal RNA large subunit methyltransferase H (159 aa).

Residues leucine 76, glycine 107, and 126 to 131 (LSKLTM) each bind S-adenosyl-L-methionine.

The protein belongs to the RNA methyltransferase RlmH family. Homodimer.

Its subcellular location is the cytoplasm. The enzyme catalyses pseudouridine(1915) in 23S rRNA + S-adenosyl-L-methionine = N(3)-methylpseudouridine(1915) in 23S rRNA + S-adenosyl-L-homocysteine + H(+). In terms of biological role, specifically methylates the pseudouridine at position 1915 (m3Psi1915) in 23S rRNA. The protein is Ribosomal RNA large subunit methyltransferase H of Acinetobacter baylyi (strain ATCC 33305 / BD413 / ADP1).